A 122-amino-acid chain; its full sequence is UPF0102 protein ECH_0093 (122 aa).

This sequence belongs to the UPF0102 family.

This chain is UPF0102 protein ECH_0093, found in Ehrlichia chaffeensis (strain ATCC CRL-10679 / Arkansas).